The following is a 72-amino-acid chain: Large ribosomal subunit protein bL28 (72 aa).

It belongs to the bacterial ribosomal protein bL28 family.

The polypeptide is Large ribosomal subunit protein bL28 (Pelodictyon phaeoclathratiforme (strain DSM 5477 / BU-1)).